The primary structure comprises 610 residues: DNA mismatch repair protein MutL (610 aa).

This sequence belongs to the DNA mismatch repair MutL/HexB family.

Its function is as follows. This protein is involved in the repair of mismatches in DNA. It is required for dam-dependent methyl-directed DNA mismatch repair. May act as a 'molecular matchmaker', a protein that promotes the formation of a stable complex between two or more DNA-binding proteins in an ATP-dependent manner without itself being part of a final effector complex. The protein is DNA mismatch repair protein MutL of Rickettsia africae (strain ESF-5).